The primary structure comprises 637 residues: Neuroendocrine convertase 2 (637 aa).

Residues 1 to 24 form the signal peptide; sequence MEGGCGSQWKAAGFLFCVMVFASA. Positions 25-108 are excised as a propeptide; it reads ERPVFTNHFL…QQEGFDRKKR (84 aa). One can recognise a Peptidase S8 domain in the interval 128–452; sequence QWYLFNTGQA…YGVLDAGAMV (325 aa). Active-site charge relay system residues include Asp-166 and His-207. 2 disulfide bridges follow: Cys-224/Cys-375 and Cys-316/Cys-346. The N-linked (GlcNAc...) asparagine glycan is linked to Asn-374. Ser-383 functions as the Charge relay system in the catalytic mechanism. The P/Homo B domain occupies 460-596; sequence TVPERFHCVG…TLMLHGTQSA (137 aa). An intrachain disulfide couples Cys-467 to Cys-493. 2 N-linked (GlcNAc...) asparagine glycosylation sites follow: Asn-513 and Asn-523.

It belongs to the peptidase S8 family. Furin subfamily.

It localises to the cytoplasmic vesicle. Its subcellular location is the secretory vesicle. It is found in the secreted. The enzyme catalyses Release of protein hormones and neuropeptides from their precursors, generally by hydrolysis of -Lys-Arg-|- bonds.. Its function is as follows. Serine endopeptidase which is involved in the processing of hormone and other protein precursors at sites comprised of pairs of basic amino acid residues. Responsible for the release of glucagon from proglucagon in pancreatic A cells. This Mus musculus (Mouse) protein is Neuroendocrine convertase 2 (Pcsk2).